The sequence spans 561 residues: Glutamate--tRNA ligase (561 aa).

Positions proline 107–histidine 117 match the 'HIGH' region motif.

It belongs to the class-I aminoacyl-tRNA synthetase family. Glutamate--tRNA ligase type 2 subfamily.

It localises to the cytoplasm. It catalyses the reaction tRNA(Glu) + L-glutamate + ATP = L-glutamyl-tRNA(Glu) + AMP + diphosphate. Its function is as follows. Catalyzes the attachment of glutamate to tRNA(Glu) in a two-step reaction: glutamate is first activated by ATP to form Glu-AMP and then transferred to the acceptor end of tRNA(Glu). This is Glutamate--tRNA ligase from Methanospirillum hungatei JF-1 (strain ATCC 27890 / DSM 864 / NBRC 100397 / JF-1).